The primary structure comprises 188 residues: Grand meiotic recombination cluster protein 2 (188 aa).

Composition is skewed to polar residues over residues 1–13 (MSDT…QSSE) and 21–31 (ERTNSLKSPDV). Positions 1 to 31 (MSDTTEVPRQSSENDQDNNLERTNSLKSPDV) are disordered.

Its function is as follows. Probable transcriptional activator involved in meiotic prophase and synaptonemal complex (SC) assembly. The protein is Grand meiotic recombination cluster protein 2 (GMC2) of Saccharomyces cerevisiae (strain ATCC 204508 / S288c) (Baker's yeast).